The sequence spans 155 residues: Transcriptional regulator MraZ (155 aa).

SpoVT-AbrB domains are found at residues 5–52 and 81–124; these read TYEN…SQDR and SMNL…EPAA.

It belongs to the MraZ family. In terms of assembly, forms oligomers.

It localises to the cytoplasm. It is found in the nucleoid. This Pelagibacter ubique (strain HTCC1062) protein is Transcriptional regulator MraZ.